The primary structure comprises 361 residues: 3-dehydroquinate synthase (361 aa).

Belongs to the archaeal-type DHQ synthase family.

It carries out the reaction 2-amino-2,3,7-trideoxy-D-lyxo-hept-6-ulosonate + NAD(+) + H2O = 3-dehydroquinate + NH4(+) + NADH + H(+). Functionally, catalyzes the oxidative deamination and cyclization of 2-amino-3,7-dideoxy-D-threo-hept-6-ulosonic acid (ADH) to yield 3-dehydroquinate (DHQ), which is fed into the canonical shikimic pathway of aromatic amino acid biosynthesis. The sequence is that of 3-dehydroquinate synthase from Methanococcus maripaludis (strain C5 / ATCC BAA-1333).